Here is a 231-residue protein sequence, read N- to C-terminus: Probable tetraspanin tspE (231 aa).

The Cytoplasmic portion of the chain corresponds to 1 to 21; the sequence is MTFVDNFEFNQNTPRLVRGPF. Residues 22 to 42 traverse the membrane as a helical segment; sequence IILNSIIFSLSFILLCSTGII. Residues 43-58 are Extracellular-facing; that stretch reads IYYLNEYYLVKDLTIP. Residues 59–79 traverse the membrane as a helical segment; sequence LGSFILSAYMVITTIVGGIAI. Residues 80–83 lie on the Cytoplasmic side of the membrane; the sequence is WKKK. Residues 84-104 traverse the membrane as a helical segment; that stretch reads LGLHLTFMVFLVVLIVCLVGV. The Extracellular portion of the chain corresponds to 105 to 195; that stretch reads SAKMIVDSGN…VESILKYLGY (91 aa). The helical transmembrane segment at 196-216 threads the bilayer; the sequence is YGIVLSVIELILLILSGFFLL. Residues 217–231 are Cytoplasmic-facing; that stretch reads KTNKNVKSKSFILQD.

Belongs to the tetraspanin (TM4SF) family.

The protein localises to the membrane. The sequence is that of Probable tetraspanin tspE (tspE) from Dictyostelium discoideum (Social amoeba).